A 237-amino-acid polypeptide reads, in one-letter code: Protein VP5 (237 aa).

The Cytoplasmic segment spans residues 1–148 (MLSIIRRKTR…TKQRCKANLR (148 aa)). The tract at residues 84 to 237 (SSSKDPDISG…SKLGKSRDIC (154 aa)) is disordered. 2 stretches are compositionally biased toward basic and acidic residues: residues 85–97 (SSKD…QKDK) and 116–130 (SRVR…HEPI). Residues 149–165 (GDSGFVSIGRSNHPKLS) form a helical membrane-spanning segment. The Extracellular segment spans residues 166 to 237 (REDCHNTRVP…SKLGKSRDIC (72 aa)). Residues 214 to 231 (RSHRRKKAKTRTKTSKLG) are compositionally biased toward basic residues.

It is found in the host membrane. This chain is Protein VP5 (VP5), found in Drosophila x virus (isolate Chung/1996) (DXV).